Consider the following 254-residue polypeptide: D-aminoacyl-tRNA deacylase (254 aa).

The tract at residues 61–83 (KPTLTVHTPGNLTEDNSHGGNPE) is disordered. A compositionally biased stretch (polar residues) spans 65-74 (TVHTPGNLTE).

The protein belongs to the DtdA deacylase family. Monomer. Zn(2+) serves as cofactor.

It carries out the reaction a D-aminoacyl-tRNA + H2O = a tRNA + a D-alpha-amino acid + H(+). The enzyme catalyses glycyl-tRNA(Ala) + H2O = tRNA(Ala) + glycine + H(+). D-aminoacyl-tRNA deacylase with broad substrate specificity. By recycling D-aminoacyl-tRNA to D-amino acids and free tRNA molecules, this enzyme counteracts the toxicity associated with the formation of D-aminoacyl-tRNA entities in vivo. This Methanococcus maripaludis (strain C7 / ATCC BAA-1331) protein is D-aminoacyl-tRNA deacylase.